A 110-amino-acid chain; its full sequence is Large ribosomal subunit protein uL22 (110 aa).

This sequence belongs to the universal ribosomal protein uL22 family. In terms of assembly, part of the 50S ribosomal subunit.

Its function is as follows. This protein binds specifically to 23S rRNA; its binding is stimulated by other ribosomal proteins, e.g. L4, L17, and L20. It is important during the early stages of 50S assembly. It makes multiple contacts with different domains of the 23S rRNA in the assembled 50S subunit and ribosome. Functionally, the globular domain of the protein is located near the polypeptide exit tunnel on the outside of the subunit, while an extended beta-hairpin is found that lines the wall of the exit tunnel in the center of the 70S ribosome. In Vibrio campbellii (strain ATCC BAA-1116), this protein is Large ribosomal subunit protein uL22.